A 396-amino-acid chain; its full sequence is Ribosomal RNA large subunit methyltransferase I (396 aa).

A PUA domain is found at 2–81; the sequence is TVSIYLAKGR…EAIDKDFFVR (80 aa).

The protein belongs to the methyltransferase superfamily. RlmI family.

Its subcellular location is the cytoplasm. The catalysed reaction is cytidine(1962) in 23S rRNA + S-adenosyl-L-methionine = 5-methylcytidine(1962) in 23S rRNA + S-adenosyl-L-homocysteine + H(+). In terms of biological role, specifically methylates the cytosine at position 1962 (m5C1962) of 23S rRNA. The polypeptide is Ribosomal RNA large subunit methyltransferase I (Aliivibrio fischeri (strain ATCC 700601 / ES114) (Vibrio fischeri)).